Reading from the N-terminus, the 437-residue chain is Methylenetetrahydrofolate--tRNA-(uracil-5-)-methyltransferase TrmFO (437 aa).

9-14 (GGGLAG) provides a ligand contact to FAD.

It belongs to the MnmG family. TrmFO subfamily. FAD is required as a cofactor.

It is found in the cytoplasm. The catalysed reaction is uridine(54) in tRNA + (6R)-5,10-methylene-5,6,7,8-tetrahydrofolate + NADH + H(+) = 5-methyluridine(54) in tRNA + (6S)-5,6,7,8-tetrahydrofolate + NAD(+). It catalyses the reaction uridine(54) in tRNA + (6R)-5,10-methylene-5,6,7,8-tetrahydrofolate + NADPH + H(+) = 5-methyluridine(54) in tRNA + (6S)-5,6,7,8-tetrahydrofolate + NADP(+). Its function is as follows. Catalyzes the folate-dependent formation of 5-methyl-uridine at position 54 (M-5-U54) in all tRNAs. This chain is Methylenetetrahydrofolate--tRNA-(uracil-5-)-methyltransferase TrmFO, found in Moorella thermoacetica (strain ATCC 39073 / JCM 9320).